Reading from the N-terminus, the 397-residue chain is Argininosuccinate synthase (397 aa).

Position 8–16 (8–16 (AYSGGLDTS)) interacts with ATP. Tyrosine 87 lines the L-citrulline pocket. ATP is bound at residue glycine 117. The L-aspartate site is built by threonine 119, asparagine 123, and aspartate 124. Asparagine 123 serves as a coordination point for L-citrulline. L-citrulline is bound by residues arginine 127, serine 175, glutamate 259, and tyrosine 271.

This sequence belongs to the argininosuccinate synthase family. Type 1 subfamily. As to quaternary structure, homotetramer.

It localises to the cytoplasm. It carries out the reaction L-citrulline + L-aspartate + ATP = 2-(N(omega)-L-arginino)succinate + AMP + diphosphate + H(+). It participates in amino-acid biosynthesis; L-arginine biosynthesis; L-arginine from L-ornithine and carbamoyl phosphate: step 2/3. In Streptomyces griseus subsp. griseus (strain JCM 4626 / CBS 651.72 / NBRC 13350 / KCC S-0626 / ISP 5235), this protein is Argininosuccinate synthase.